The primary structure comprises 46 residues: Acetylajmalan esterase (46 aa).

Asparagine 39 is a glycosylation site (N-linked (GlcNAc...) asparagine).

Belongs to the 'GDSL' lipolytic enzyme family.

The catalysed reaction is 17-O-acetylajmaline + H2O = ajmaline + acetate + H(+). The enzyme catalyses 17-O-acetylnorajmaline + H2O = norajmaline + acetate + H(+). Its function is as follows. Deacetylates 17-O-acetylajmaline and 17-O-acetylnorajmaline, but is inactive toward other acetylated alkaloids. The protein is Acetylajmalan esterase of Rauvolfia verticillata (Common devil-pepper).